We begin with the raw amino-acid sequence, 178 residues long: Arginine repressor (178 aa).

The segment at 1-20 is disordered; it reads MTEAQEPEYGGPSVPQTRTA.

The protein belongs to the ArgR family.

Its subcellular location is the cytoplasm. It participates in amino-acid biosynthesis; L-arginine biosynthesis [regulation]. Regulates arginine biosynthesis genes. The sequence is that of Arginine repressor from Streptomyces griseus subsp. griseus (strain JCM 4626 / CBS 651.72 / NBRC 13350 / KCC S-0626 / ISP 5235).